The chain runs to 176 residues: MTNIRKTHPLAKIINNSLIDLPAPSNISSWWNFGSLLGICLGLQILTGLFLAMHYTADTATAFNSVTHICRDVNYGWVLRYLHANGASMFFICLYLHVGRGIYYGSYLYKETWNMGVVLLFAVMATAFMGYVLPWGQMSFWGATVITNLLSAIPYIGNDLVEWIWGGFSVDKATLT.

Transmembrane regions (helical) follow at residues F33–M53, W77–V98, and W113–L133. Positions 83 and 97 each coordinate heme b.

It belongs to the cytochrome b family. The cytochrome bc1 complex contains 11 subunits: 3 respiratory subunits (MT-CYB, CYC1 and UQCRFS1), 2 core proteins (UQCRC1 and UQCRC2) and 6 low-molecular weight proteins (UQCRH/QCR6, UQCRB/QCR7, UQCRQ/QCR8, UQCR10/QCR9, UQCR11/QCR10 and a cleavage product of UQCRFS1). This cytochrome bc1 complex then forms a dimer. It depends on heme b as a cofactor.

Its subcellular location is the mitochondrion inner membrane. Component of the ubiquinol-cytochrome c reductase complex (complex III or cytochrome b-c1 complex) that is part of the mitochondrial respiratory chain. The b-c1 complex mediates electron transfer from ubiquinol to cytochrome c. Contributes to the generation of a proton gradient across the mitochondrial membrane that is then used for ATP synthesis. The polypeptide is Cytochrome b (MT-CYB) (Nycticeius humeralis (Evening bat)).